The sequence spans 343 residues: DNA repair and recombination protein RadA (343 aa).

Gly107–Ser114 lines the ATP pocket.

The protein belongs to the eukaryotic RecA-like protein family.

In terms of biological role, involved in DNA repair and in homologous recombination. Binds and assemble on single-stranded DNA to form a nucleoprotein filament. Hydrolyzes ATP in a ssDNA-dependent manner and promotes DNA strand exchange between homologous DNA molecules. In Halobacterium salinarum (strain ATCC 29341 / DSM 671 / R1), this protein is DNA repair and recombination protein RadA.